The chain runs to 549 residues: Hydroxylamine reductase (549 aa).

Residues Cys3, Cys6, Cys15, and Cys21 each contribute to the [4Fe-4S] cluster site. Hybrid [4Fe-2O-2S] cluster contacts are provided by His244, Glu268, Cys313, Cys405, Cys433, Cys458, Glu492, and Lys494. Cys405 carries the post-translational modification Cysteine persulfide.

This sequence belongs to the HCP family. [4Fe-4S] cluster serves as cofactor. The cofactor is hybrid [4Fe-2O-2S] cluster.

Its subcellular location is the cytoplasm. The enzyme catalyses A + NH4(+) + H2O = hydroxylamine + AH2 + H(+). In terms of biological role, catalyzes the reduction of hydroxylamine to form NH(3) and H(2)O. In Crocosphaera subtropica (strain ATCC 51142 / BH68) (Cyanothece sp. (strain ATCC 51142)), this protein is Hydroxylamine reductase.